The sequence spans 445 residues: Exodeoxyribonuclease 7 large subunit (445 aa).

The protein belongs to the XseA family. In terms of assembly, heterooligomer composed of large and small subunits.

It localises to the cytoplasm. It catalyses the reaction Exonucleolytic cleavage in either 5'- to 3'- or 3'- to 5'-direction to yield nucleoside 5'-phosphates.. Functionally, bidirectionally degrades single-stranded DNA into large acid-insoluble oligonucleotides, which are then degraded further into small acid-soluble oligonucleotides. The sequence is that of Exodeoxyribonuclease 7 large subunit from Delftia acidovorans (strain DSM 14801 / SPH-1).